Reading from the N-terminus, the 330-residue chain is tRNA (cytosine(38)-C(5))-methyltransferase (330 aa).

Residues 7–330 (LRVLELYSGI…ISLLLEPLNF (324 aa)) form the SAM-dependent MTase C5-type domain. The active site involves Cys81.

This sequence belongs to the class I-like SAM-binding methyltransferase superfamily. C5-methyltransferase family.

The protein resides in the cytoplasm. Its subcellular location is the nucleus. It carries out the reaction cytidine(38) in tRNA + S-adenosyl-L-methionine = 5-methylcytidine(38) in tRNA + S-adenosyl-L-homocysteine + H(+). Functionally, specifically methylates cytosine 38 in the anticodon loop of tRNA(Asp). Can also methylate cytosine 38 in tRNA(Glu), albeit to a lower level, but not tRNA(Lys). Pmt1-dependent tRNA methylation is induced by nitrogen limitation and depends on the nutrient-sensing protein kinase sck2. Does not have DNA-methylation activity. This chain is tRNA (cytosine(38)-C(5))-methyltransferase (pmt1), found in Schizosaccharomyces pombe (strain 972 / ATCC 24843) (Fission yeast).